A 562-amino-acid polypeptide reads, in one-letter code: MFS-type efflux pump elcC (562 aa).

11 consecutive transmembrane segments (helical) span residues 50–70, 80–100, 111–131, 139–159, 184–204, 215–235, 257–277, 288–308, 309–329, 351–371, and 383–403; these read WVFL…GAAP, VVAG…VAEF, GMLG…GGAF, LCFY…FLLV, LYGL…TQWG, IIAL…IEIW, IFSF…PLWF, SGIH…AAGG, MVFG…LAAV, VLYG…IQAA, and VVIF…QNVF. N-linked (GlcNAc...) asparagine glycosylation is present at N448. A helical membrane pass occupies residues 455–475; the sequence is FYVAVATAGLSMAGSILIPWL. The disordered stretch occupies residues 515-562; sequence EIASEDSQSSDIEKVPRNNEVSTYDSQTSEVEKSSVGSTNRKVESIRN. The segment covering 533-554 has biased composition (polar residues); that stretch reads NEVSTYDSQTSEVEKSSVGSTN.

The protein belongs to the major facilitator superfamily. TCR/Tet family.

It is found in the cell membrane. In terms of biological role, MFS-type efflux pump; part of the gene cluster that mediates the biosynthesis of elsinochrome C, a perelyenequinone phytotoxin structurally similar to cercosporin. The polypeptide is MFS-type efflux pump elcC (Phaeosphaeria nodorum (strain SN15 / ATCC MYA-4574 / FGSC 10173) (Glume blotch fungus)).